The following is a 129-amino-acid chain: Translation initiation factor 5A (129 aa).

Position 36 is a hypusine (Lys36).

Belongs to the eIF-5A family.

The protein resides in the cytoplasm. Functionally, functions by promoting the formation of the first peptide bond. The protein is Translation initiation factor 5A (eIF5A) of Methanobrevibacter smithii (strain ATCC 35061 / DSM 861 / OCM 144 / PS).